The following is a 122-amino-acid chain: Large ribosomal subunit protein uL22 (122 aa).

The tract at residues 102–122 (VAEGKEMKSSKSHKKNQAEGK) is disordered.

It belongs to the universal ribosomal protein uL22 family. As to quaternary structure, part of the 50S ribosomal subunit.

Its function is as follows. This protein binds specifically to 23S rRNA; its binding is stimulated by other ribosomal proteins, e.g. L4, L17, and L20. It is important during the early stages of 50S assembly. It makes multiple contacts with different domains of the 23S rRNA in the assembled 50S subunit and ribosome. The globular domain of the protein is located near the polypeptide exit tunnel on the outside of the subunit, while an extended beta-hairpin is found that lines the wall of the exit tunnel in the center of the 70S ribosome. The chain is Large ribosomal subunit protein uL22 from Helicobacter pylori (strain G27).